The chain runs to 629 residues: Leucine-rich repeat protein soc-2 homolog (629 aa).

The span at 1–19 (MNLCSSGATASTTSLSSTG) shows a compositional bias: low complexity. The interval 1–133 (MNLCSSGATA…PTTKKSKPIQ (133 aa)) is disordered. Residues 21 to 45 (RNGGTSEGGGEGAGGGGGSGGGGGN) show a composition bias toward gly residues. LRR repeat units lie at residues 149-170 (GIKR…VKEC), 172-193 (HLTE…IGCL), 195-217 (NLRN…QNCK), 218-239 (QLKV…IYRL), 241-262 (TLTT…LRQL), 264-285 (NLTM…IGAL), 287-308 (NLTT…IGNC), 310-331 (NLSA…IGNL), 333-355 (SLVR…KNCK), 356-377 (SMDE…MLAS), 380-401 (GLTT…GPAQ), 404-425 (NVYS…IFSR), 428-449 (GLTK…IGTW), 451-472 (NMVE…IMNL), 474-495 (NLEI…IGNM), 497-518 (KLRI…IGLL), 520-541 (ELQR…IGHL), 543-564 (NLTH…IGSL), 566-588 (GLEN…LALC), and 590-611 (NLKY…IQAG).

This sequence belongs to the SHOC2 family.

In terms of biological role, acts as a Ras effector and participates in MAPK pathway activation. Probably acts as a regulatory subunit of protein phosphatase that specifically dephosphorylates Raf kinase and stimulate Raf activity at specialized signaling complexes upon Ras activation. This Drosophila pseudoobscura pseudoobscura (Fruit fly) protein is Leucine-rich repeat protein soc-2 homolog (Sur-8).